The chain runs to 687 residues: Transketolase 2 (687 aa).

His-47 serves as a coordination point for substrate. Thiamine diphosphate-binding positions include His-87 and 135–137 (GPL). Position 176 (Asp-176) interacts with Mg(2+). Positions 177 and 206 each coordinate thiamine diphosphate. Asn-206 and Ile-208 together coordinate Mg(2+). His-282, Arg-379, and Ser-406 together coordinate substrate. His-282 provides a ligand contact to thiamine diphosphate. The active-site Proton donor is Glu-432. A thiamine diphosphate-binding site is contributed by Phe-458. The substrate site is built by His-482, Asp-490, His-494, and Arg-541.

The protein belongs to the transketolase family. It depends on Mg(2+) as a cofactor. The cofactor is thiamine diphosphate.

It carries out the reaction D-sedoheptulose 7-phosphate + D-glyceraldehyde 3-phosphate = aldehydo-D-ribose 5-phosphate + D-xylulose 5-phosphate. Its activity is regulated as follows. Activity is increased sixfold following autotrophic growth on methanol compared with that of heterotrophically grown cells. Functionally, catalyzes the transfer of a two-carbon ketol group from a ketose donor to an aldose acceptor, via a covalent intermediate with the cofactor thiamine pyrophosphate. This Xanthobacter flavus protein is Transketolase 2.